We begin with the raw amino-acid sequence, 325 residues long: uncharacterized protein (325 aa).

The tract at residues 1-75 (MSQPPEHPGN…PPPGYPTHLQ (75 aa)) is disordered. Over residues 24 to 70 (YPPPGYGAPPPPPGYGPPPGTYLPPGYNAPPPPPGYGPPPGPPPPGY) the composition is skewed to pro residues. Helical transmembrane passes span 96–116 (AVTL…VIGA), 153–173 (IVMF…HAGI), 205–225 (LLIV…GLIF), and 273–293 (LVGE…AALI).

This sequence to M.tuberculosis Rv2560.

The protein localises to the cell membrane. This is an uncharacterized protein from Mycobacterium bovis (strain ATCC BAA-935 / AF2122/97).